The sequence spans 122 residues: Small ribosomal subunit protein uS13 (122 aa).

The interval 94–122 is disordered; it reads GLPVRGQSTQKNARTRKGPRKTVAGKKGK. Over residues 106–122 the composition is skewed to basic residues; it reads ARTRKGPRKTVAGKKGK.

The protein belongs to the universal ribosomal protein uS13 family. Part of the 30S ribosomal subunit. Forms a loose heterodimer with protein S19. Forms two bridges to the 50S subunit in the 70S ribosome.

Its function is as follows. Located at the top of the head of the 30S subunit, it contacts several helices of the 16S rRNA. In the 70S ribosome it contacts the 23S rRNA (bridge B1a) and protein L5 of the 50S subunit (bridge B1b), connecting the 2 subunits; these bridges are implicated in subunit movement. Contacts the tRNAs in the A and P-sites. The protein is Small ribosomal subunit protein uS13 of Mycoplasmopsis synoviae (strain 53) (Mycoplasma synoviae).